Consider the following 407-residue polypeptide: Arginine biosynthesis bifunctional protein ArgJ (407 aa).

6 residues coordinate substrate: Thr-154, Lys-180, Thr-191, Glu-278, Asn-402, and Ser-407. Thr-191 acts as the Nucleophile in catalysis.

Belongs to the ArgJ family. Heterotetramer of two alpha and two beta chains.

The protein resides in the cytoplasm. It catalyses the reaction N(2)-acetyl-L-ornithine + L-glutamate = N-acetyl-L-glutamate + L-ornithine. It carries out the reaction L-glutamate + acetyl-CoA = N-acetyl-L-glutamate + CoA + H(+). It participates in amino-acid biosynthesis; L-arginine biosynthesis; L-ornithine and N-acetyl-L-glutamate from L-glutamate and N(2)-acetyl-L-ornithine (cyclic): step 1/1. The protein operates within amino-acid biosynthesis; L-arginine biosynthesis; N(2)-acetyl-L-ornithine from L-glutamate: step 1/4. Catalyzes two activities which are involved in the cyclic version of arginine biosynthesis: the synthesis of N-acetylglutamate from glutamate and acetyl-CoA as the acetyl donor, and of ornithine by transacetylation between N(2)-acetylornithine and glutamate. This chain is Arginine biosynthesis bifunctional protein ArgJ, found in Psychrobacter arcticus (strain DSM 17307 / VKM B-2377 / 273-4).